Here is a 96-residue protein sequence, read N- to C-terminus: NADH-ubiquinone oxidoreductase chain 4L (96 aa).

3 helical membrane passes run 2 to 22 (IMFL…FCFV), 28 to 48 (LLSM…MLFI), and 62 to 82 (MFLT…VSMI).

Belongs to the complex I subunit 4L family.

The protein localises to the mitochondrion membrane. The catalysed reaction is a ubiquinone + NADH + 5 H(+)(in) = a ubiquinol + NAD(+) + 4 H(+)(out). Core subunit of the mitochondrial membrane respiratory chain NADH dehydrogenase (Complex I) that is believed to belong to the minimal assembly required for catalysis. Complex I functions in the transfer of electrons from NADH to the respiratory chain. The immediate electron acceptor for the enzyme is believed to be ubiquinone. The polypeptide is NADH-ubiquinone oxidoreductase chain 4L (mt:ND4L) (Drosophila nasuta F (Fruit fly)).